The chain runs to 406 residues: Bifunctional enzyme IspD/IspF (406 aa).

A 2-C-methyl-D-erythritol 4-phosphate cytidylyltransferase region spans residues 1–247 (MSLIRVNGEA…TLFFNPAKDT (247 aa)). The segment at 248 to 406 (FIGMGFDTHA…HVSMRYKQKL (159 aa)) is 2-C-methyl-D-erythritol 2,4-cyclodiphosphate synthase. Residues Asp254 and His256 each contribute to the a divalent metal cation site. Residues 254–256 (DTH) and 280–281 (HS) contribute to the 4-CDP-2-C-methyl-D-erythritol 2-phosphate site. His288 contacts a divalent metal cation. Residues 302 to 304 (DIG), 307 to 311 (FPDND), 378 to 381 (TTME), Phe385, and Lys388 each bind 4-CDP-2-C-methyl-D-erythritol 2-phosphate.

The protein in the N-terminal section; belongs to the IspD/TarI cytidylyltransferase family. IspD subfamily. In the C-terminal section; belongs to the IspF family. The cofactor is a divalent metal cation.

The enzyme catalyses 2-C-methyl-D-erythritol 4-phosphate + CTP + H(+) = 4-CDP-2-C-methyl-D-erythritol + diphosphate. The catalysed reaction is 4-CDP-2-C-methyl-D-erythritol 2-phosphate = 2-C-methyl-D-erythritol 2,4-cyclic diphosphate + CMP. It functions in the pathway isoprenoid biosynthesis; isopentenyl diphosphate biosynthesis via DXP pathway; isopentenyl diphosphate from 1-deoxy-D-xylulose 5-phosphate: step 2/6. The protein operates within isoprenoid biosynthesis; isopentenyl diphosphate biosynthesis via DXP pathway; isopentenyl diphosphate from 1-deoxy-D-xylulose 5-phosphate: step 4/6. Bifunctional enzyme that catalyzes the formation of 4-diphosphocytidyl-2-C-methyl-D-erythritol from CTP and 2-C-methyl-D-erythritol 4-phosphate (MEP) (IspD), and catalyzes the conversion of 4-diphosphocytidyl-2-C-methyl-D-erythritol 2-phosphate (CDP-ME2P) to 2-C-methyl-D-erythritol 2,4-cyclodiphosphate (ME-CPP) with a corresponding release of cytidine 5-monophosphate (CMP) (IspF). This is Bifunctional enzyme IspD/IspF from Helicobacter pylori (strain ATCC 700392 / 26695) (Campylobacter pylori).